The chain runs to 328 residues: Probable cytosolic iron-sulfur protein assembly protein 1 (328 aa).

WD repeat units lie at residues 12-49 (LHGD…LVEE), 54-93 (AHKK…YSGE), 102-141 (GHEN…EEFE), 148-187 (EHSQ…WECA), 192-233 (GHGG…ADVF), 246-284 (VHTR…RWEV), and 291-328 (AHTV…LREE).

The protein belongs to the WD repeat CIA1 family. In terms of assembly, interacts with NAR1.

Its subcellular location is the cytoplasm. It localises to the nucleus. Functionally, essential component of the cytosolic iron-sulfur (Fe/S) protein assembly machinery. Required for the maturation of extramitochondrial Fe/S proteins. The sequence is that of Probable cytosolic iron-sulfur protein assembly protein 1 from Eremothecium gossypii (strain ATCC 10895 / CBS 109.51 / FGSC 9923 / NRRL Y-1056) (Yeast).